We begin with the raw amino-acid sequence, 71 residues long: Large ribosomal subunit protein bL31 (71 aa).

Cysteine 16, cysteine 18, cysteine 37, and cysteine 40 together coordinate Zn(2+).

Belongs to the bacterial ribosomal protein bL31 family. Type A subfamily. In terms of assembly, part of the 50S ribosomal subunit. Requires Zn(2+) as cofactor.

Functionally, binds the 23S rRNA. The chain is Large ribosomal subunit protein bL31 from Aeromonas salmonicida (strain A449).